The following is a 358-amino-acid chain: Peptide chain release factor 1 (358 aa).

The residue at position 234 (glutamine 234) is an N5-methylglutamine. A disordered region spans residues 283–306; sequence ERLHSERAGQRKSMVGSGDRSERI.

The protein belongs to the prokaryotic/mitochondrial release factor family. In terms of processing, methylated by PrmC. Methylation increases the termination efficiency of RF1.

It is found in the cytoplasm. Functionally, peptide chain release factor 1 directs the termination of translation in response to the peptide chain termination codons UAG and UAA. This is Peptide chain release factor 1 from Zymomonas mobilis subsp. mobilis (strain ATCC 31821 / ZM4 / CP4).